Reading from the N-terminus, the 388-residue chain is N5-carboxyaminoimidazole ribonucleotide synthase (388 aa).

Residues Lys-105, Lys-140, 174-177 (ESFV), Glu-182, and 267-268 (NE) contribute to the ATP site. The region spanning 109–297 (RHFLQNLGLP…QFALQLQAVT (189 aa)) is the ATP-grasp domain.

This sequence belongs to the PurK/PurT family. As to quaternary structure, homodimer.

The enzyme catalyses 5-amino-1-(5-phospho-beta-D-ribosyl)imidazole + hydrogencarbonate + ATP = 5-carboxyamino-1-(5-phospho-D-ribosyl)imidazole + ADP + phosphate + 2 H(+). It participates in purine metabolism; IMP biosynthesis via de novo pathway; 5-amino-1-(5-phospho-D-ribosyl)imidazole-4-carboxylate from 5-amino-1-(5-phospho-D-ribosyl)imidazole (N5-CAIR route): step 1/2. Its function is as follows. Catalyzes the ATP-dependent conversion of 5-aminoimidazole ribonucleotide (AIR) and HCO(3)(-) to N5-carboxyaminoimidazole ribonucleotide (N5-CAIR). The protein is N5-carboxyaminoimidazole ribonucleotide synthase of Synechocystis sp. (strain ATCC 27184 / PCC 6803 / Kazusa).